Reading from the N-terminus, the 301-residue chain is Heterogeneous nuclear ribonucleoprotein D-like (301 aa).

2 RRM domains span residues 29–111 (GKMF…KGKE) and 114–193 (KKVF…QPKE). Residue K42 is modified to N6-methyllysine. A Glycyl lysine isopeptide (Lys-Gly) (interchain with G-Cter in SUMO2) cross-link involves residue K90. Position 97 is an N6-acetyllysine (K97). Phosphoserine is present on S122. 2 disordered regions span residues 194 to 229 (VYRQ…NWNQ) and 279 to 301 (GQQS…YQPY). Residues 204–223 (GGRGAAAGGRGGARGRGRGQ) are compositionally biased toward gly residues. The interval 223–301 (QGQNWNQGFN…GNHQNNYQPY (79 aa)) is necessary for interaction with TNPO1. The residue at position 289 (R289) is a Dimethylated arginine; alternate. R289 bears the Omega-N-methylarginine; alternate mark.

In terms of assembly, interacts with TNPO1. Interacts with ZNF148. In terms of processing, dimethylation of Arg-289 is probably of the asymmetric type. As to expression, expressed in skeletal muscle, myoblast, myotube, heart, brain, liver, kidney, heart, lung, stomach, small intestine, large intestine, spleen, and testis (at protein level). Expressed in brain, skeletal muscle, heart, lung, liver, stomach, small intestine, large intestine, kidney, spleen and testis.

The protein localises to the nucleus. Its subcellular location is the cytoplasm. Functionally, acts as a transcriptional regulator. Promotes transcription repression. Promotes transcription activation in differentiated myotubes. Binds to double- and single-stranded DNA sequences. Binds to the transcription suppressor CATR sequence of the COX5B promoter. Binds with high affinity to RNA molecules that contain AU-rich elements (AREs) found within the 3'-UTR of many proto-oncogenes and cytokine mRNAs. Binds both to nuclear and cytoplasmic poly(A) mRNAs. Binds to poly(G) and poly(A), but not to poly(U) or poly(C) RNA homopolymers. Binds to the 5'-ACUAGC-3' RNA consensus sequence. The sequence is that of Heterogeneous nuclear ribonucleoprotein D-like (Hnrnpdl) from Mus musculus (Mouse).